The sequence spans 186 residues: MPLREFKIVVLGSGGVGKSALTVQFVQGIFVEKYDPTIEDSYRKQVEVDSNQCMLEILDTAGTEQFTAMRDLYMKNGQGFVLVYSIISNSTFNELPDLREQILRVKDCEDVPMVLVGNKCDLHDQRVISTEQGEELARKFGDCYFLEASAKNKVNVEQIFYNLIRQINRKNPVGPPSKAKSKCALL.

12–19 (GSGGVGKS) contributes to the GTP binding site. Positions 34 to 42 (YDPTIEDSY) match the Effector region motif. GTP is bound by residues 59 to 63 (DTAGT) and 118 to 121 (NKCD). At Cys183 the chain carries Cysteine methyl ester. Cys183 carries the S-geranylgeranyl cysteine lipid modification. Residues 184-186 (ALL) constitute a propeptide, removed in mature form.

It belongs to the small GTPase superfamily. Ras family. In terms of assembly, interacts with ralGDS (only when rapA is in its GTP-bound state). Interacts with the Rap guanine nucleotide exchange factor glfB.

Its subcellular location is the cell membrane. It catalyses the reaction GTP + H2O = GDP + phosphate + H(+). G protein of the Ras family that positively regulates phagocytosis and negatively regulates macropinocytosis. May be involved in the activation of guanylyl cyclase during the response to hyperosmotic conditions. Overexpressing cells generate alterations in cell shape and contractile responses. Involved in chemotaxis via regulation of the balance of Ras and Rap signaling at the leading edge of chemotaxing cells. The sequence is that of Ras-related protein rapA (rapA) from Dictyostelium discoideum (Social amoeba).